The sequence spans 375 residues: Queuine tRNA-ribosyltransferase (375 aa).

The active-site Proton acceptor is the D89. Substrate is bound by residues 89–93 (DSGGF), D143, Q187, and G214. Residues 245–251 (GVGKPED) are RNA binding. D264 functions as the Nucleophile in the catalytic mechanism. The segment at 269 to 273 (TRNAR) is RNA binding; important for wobble base 34 recognition. C302, C304, C307, and H333 together coordinate Zn(2+).

Belongs to the queuine tRNA-ribosyltransferase family. In terms of assembly, homodimer. Within each dimer, one monomer is responsible for RNA recognition and catalysis, while the other monomer binds to the replacement base PreQ1. The cofactor is Zn(2+).

The catalysed reaction is 7-aminomethyl-7-carbaguanine + guanosine(34) in tRNA = 7-aminomethyl-7-carbaguanosine(34) in tRNA + guanine. It participates in tRNA modification; tRNA-queuosine biosynthesis. Catalyzes the base-exchange of a guanine (G) residue with the queuine precursor 7-aminomethyl-7-deazaguanine (PreQ1) at position 34 (anticodon wobble position) in tRNAs with GU(N) anticodons (tRNA-Asp, -Asn, -His and -Tyr). Catalysis occurs through a double-displacement mechanism. The nucleophile active site attacks the C1' of nucleotide 34 to detach the guanine base from the RNA, forming a covalent enzyme-RNA intermediate. The proton acceptor active site deprotonates the incoming PreQ1, allowing a nucleophilic attack on the C1' of the ribose to form the product. After dissociation, two additional enzymatic reactions on the tRNA convert PreQ1 to queuine (Q), resulting in the hypermodified nucleoside queuosine (7-(((4,5-cis-dihydroxy-2-cyclopenten-1-yl)amino)methyl)-7-deazaguanosine). This is Queuine tRNA-ribosyltransferase from Aliivibrio salmonicida (strain LFI1238) (Vibrio salmonicida (strain LFI1238)).